The primary structure comprises 520 residues: Cytochrome P450 315a1, mitochondrial (520 aa).

Position 466 (C466) interacts with heme.

This sequence belongs to the cytochrome P450 family. It depends on heme as a cofactor. In terms of tissue distribution, complex coexpression pattern of dib (disembodied) and sad (shade) in the early embryo that restricts to the prothoracic gland cells of the developing ring gland during late embryogenesis. In larvae and adult, coexpression is seen in prothoracic gland and follicle cells of the ovary. In adults, coexpression is seen in the follicle cells, sad only is expressed in nurse cells.

Its subcellular location is the mitochondrion membrane. It carries out the reaction 2-deoxyecdysone + 2 reduced [adrenodoxin] + O2 + 2 H(+) = ecdysone + 2 oxidized [adrenodoxin] + H2O. The catalysed reaction is 2,22-dideoxyecdysone + 2 reduced [adrenodoxin] + O2 + 2 H(+) = 22-deoxyecdysone + 2 oxidized [adrenodoxin] + H2O. The protein operates within steroid biosynthesis; ecdysteroid biosynthesis. Required for CNS development: midline glial cells. Involved in the metabolism of insect hormones: responsible for ecdysteroid C2-hydroxylase activity. May be involved in the breakdown of synthetic insecticides. The polypeptide is Cytochrome P450 315a1, mitochondrial (Drosophila melanogaster (Fruit fly)).